A 418-amino-acid polypeptide reads, in one-letter code: eIF5-mimic protein 2 (418 aa).

Polar residues predominate over residues 1-14 (MNQKQQKPTLSGQR). The tract at residues 1 to 25 (MNQKQQKPTLSGQRFKTRKRDEKER) is disordered. A W2 domain is found at 246 to 413 (NQQTIGARKE…KNAEEESESE (168 aa)).

The protein belongs to the BZW family.

In terms of biological role, translation initiation regulator which may repress repeat-associated non-AUG (RAN) initiated translation probably by acting as a competitive inhibitor of eukaryotic translation initiation factor 5 (EIF5) function. Enhances histone H4 gene transcription but does not seem to bind DNA directly. The chain is eIF5-mimic protein 2 (BZW1) from Gallus gallus (Chicken).